Consider the following 155-residue polypeptide: Archaemetzincin (155 aa).

Zn(2+) is bound at residue histidine 109. Glutamate 110 serves as the catalytic Proton acceptor. Positions 113, 119, 120, 125, 144, and 147 each coordinate Zn(2+).

It belongs to the peptidase M54 family. As to quaternary structure, monomer. It depends on Zn(2+) as a cofactor.

Its function is as follows. Probable zinc metalloprotease whose natural substrate is unknown. The chain is Archaemetzincin from Pyrobaculum aerophilum (strain ATCC 51768 / DSM 7523 / JCM 9630 / CIP 104966 / NBRC 100827 / IM2).